The primary structure comprises 322 residues: Picrinine-N-methytransferase (322 aa).

The tract at residues 103–112 (MLDVGCGLGG) is SAM motif I. Residues 166-174 (GTFDLVFTI) are SAM motif II. The segment at 193–202 (VAAPGAPVVI) is SAM motif III.

The protein belongs to the class I-like SAM-binding methyltransferase superfamily. gTMT family. Homodimer. As to expression, accumulates in tissues actively synthesizing monoterpenoid indole alkaloids (MIAs) (at protein level). Mainly expressed in young leaves, but barely in roots and stems.

The protein resides in the cytoplasm. The protein localises to the cytosol. It carries out the reaction picrinine + S-adenosyl-L-methionine = ervincine + S-adenosyl-L-homocysteine + H(+). It participates in alkaloid biosynthesis; vindoline biosynthesis. Its function is as follows. S-adenosyl-L-methionine-dependent N-methyltransferase involved in the biosynthesis of biologically active monoterpenoid indole alkaloids (MIAs) natural products including vindoline. Catalyzes the conversion of picrinine to N-methylpicrinine (ervincine). Also accepts, with low efficiency, 21-hydroxycyclolochnericine and norajmaline as substrates. The polypeptide is Picrinine-N-methytransferase (Vinca minor (Common periwinkle)).